A 216-amino-acid polypeptide reads, in one-letter code: MNLILMGLPGAGKGTQAEKIIDTYGIPHISTGDMFRAAMKNETALGLEAKSYIDKGELVPDEVTNGIVKERLAEPDTDKGFLLDGFPRTLDQAKALDTMLKELNKKIDAVIDIHVEEDVLIERLAGRFICRTCGATYHKLFNPPKVEGTCDRCGGHEFYQREDDKPETVKNRLAVNIESSAPILAFYKEQGLMHTIDGNREIDTVFSDVKKIIDEN.

Residue 10–15 (GAGKGT) participates in ATP binding. The tract at residues 30 to 59 (STGDMFRAAMKNETALGLEAKSYIDKGELV) is NMP. Residues T31, R36, 57-59 (ELV), 85-88 (GFPR), and Q92 contribute to the AMP site. The interval 126–164 (GRFICRTCGATYHKLFNPPKVEGTCDRCGGHEFYQREDD) is LID. R127 is an ATP binding site. Positions 130 and 133 each coordinate Zn(2+). Position 136 to 137 (136 to 137 (TY)) interacts with ATP. Residues C150 and C153 each coordinate Zn(2+). Residues R161 and R172 each coordinate AMP. R200 is a binding site for ATP.

Belongs to the adenylate kinase family. In terms of assembly, monomer.

Its subcellular location is the cytoplasm. The enzyme catalyses AMP + ATP = 2 ADP. It functions in the pathway purine metabolism; AMP biosynthesis via salvage pathway; AMP from ADP: step 1/1. Functionally, catalyzes the reversible transfer of the terminal phosphate group between ATP and AMP. Plays an important role in cellular energy homeostasis and in adenine nucleotide metabolism. The chain is Adenylate kinase from Enterococcus faecalis (strain ATCC 700802 / V583).